The sequence spans 242 residues: 1-(5-phosphoribosyl)-5-[(5-phosphoribosylamino)methylideneamino] imidazole-4-carboxamide isomerase (242 aa).

Aspartate 7 serves as the catalytic Proton acceptor. Catalysis depends on aspartate 129, which acts as the Proton donor.

This sequence belongs to the HisA/HisF family.

The protein localises to the cytoplasm. It catalyses the reaction 1-(5-phospho-beta-D-ribosyl)-5-[(5-phospho-beta-D-ribosylamino)methylideneamino]imidazole-4-carboxamide = 5-[(5-phospho-1-deoxy-D-ribulos-1-ylimino)methylamino]-1-(5-phospho-beta-D-ribosyl)imidazole-4-carboxamide. It participates in amino-acid biosynthesis; L-histidine biosynthesis; L-histidine from 5-phospho-alpha-D-ribose 1-diphosphate: step 4/9. The polypeptide is 1-(5-phosphoribosyl)-5-[(5-phosphoribosylamino)methylideneamino] imidazole-4-carboxamide isomerase (Pseudoalteromonas translucida (strain TAC 125)).